The chain runs to 241 residues: Uridylate kinase (241 aa).

9-10 contributes to the ATP binding site; the sequence is GS. G44 provides a ligand contact to UMP. The ATP site is built by G45 and R49. Residues D66 and 114 to 120 each bind UMP; that span reads VTPGQTT. ATP-binding residues include T140, Y146, and D149. Positions 222–241 are disordered; it reads TDVIPTGSEEPIYWTGSSDA.

This sequence belongs to the UMP kinase family. Homohexamer.

It is found in the cytoplasm. It carries out the reaction UMP + ATP = UDP + ADP. It participates in pyrimidine metabolism; CTP biosynthesis via de novo pathway; UDP from UMP (UMPK route): step 1/1. With respect to regulation, inhibited by UTP. Functionally, catalyzes the reversible phosphorylation of UMP to UDP. The sequence is that of Uridylate kinase from Halorubrum lacusprofundi (strain ATCC 49239 / DSM 5036 / JCM 8891 / ACAM 34).